Consider the following 457-residue polypeptide: Multidrug resistance protein MdtK (457 aa).

12 helical membrane passes run 11 to 31 (LLAL…MGFV), 53 to 73 (IWLP…PVIA), 93 to 113 (WLAG…GYII), 127 to 147 (AVGY…FQVA), 160 to 180 (GMVM…IFIY), 189 to 209 (GGVG…LAMV), 243 to 263 (LPIA…ALLV), 276 to 296 (IALN…AAVT), 314 to 334 (AART…IFTV), 350 to 370 (VVTL…SDSI), 387 to 407 (IFYI…YILA), and 418 to 438 (PAGF…MMML).

The protein belongs to the multi antimicrobial extrusion (MATE) (TC 2.A.66.1) family. MdtK subfamily.

It localises to the cell inner membrane. Multidrug efflux pump that functions probably as a Na(+)/drug antiporter. This is Multidrug resistance protein MdtK from Escherichia coli O45:K1 (strain S88 / ExPEC).